A 329-amino-acid polypeptide reads, in one-letter code: Beta-ketoacyl-[acyl-carrier-protein] synthase III (329 aa).

Catalysis depends on residues cysteine 113 and histidine 255. Residues 256–260 form an ACP-binding region; that stretch reads QANQR. Asparagine 285 is a catalytic residue.

It belongs to the thiolase-like superfamily. FabH family. As to quaternary structure, homodimer.

Its subcellular location is the cytoplasm. It carries out the reaction malonyl-[ACP] + acetyl-CoA + H(+) = 3-oxobutanoyl-[ACP] + CO2 + CoA. It functions in the pathway lipid metabolism; fatty acid biosynthesis. Functionally, catalyzes the condensation reaction of fatty acid synthesis by the addition to an acyl acceptor of two carbons from malonyl-ACP. Catalyzes the first condensation reaction which initiates fatty acid synthesis and may therefore play a role in governing the total rate of fatty acid production. Possesses both acetoacetyl-ACP synthase and acetyl transacylase activities. Its substrate specificity determines the biosynthesis of branched-chain and/or straight-chain of fatty acids. The protein is Beta-ketoacyl-[acyl-carrier-protein] synthase III of Chlorobium luteolum (strain DSM 273 / BCRC 81028 / 2530) (Pelodictyon luteolum).